A 278-amino-acid polypeptide reads, in one-letter code: Elongation factor Ts (278 aa).

The tract at residues 82–85 (TDFV) is involved in Mg(2+) ion dislocation from EF-Tu.

This sequence belongs to the EF-Ts family.

Its subcellular location is the cytoplasm. Functionally, associates with the EF-Tu.GDP complex and induces the exchange of GDP to GTP. It remains bound to the aminoacyl-tRNA.EF-Tu.GTP complex up to the GTP hydrolysis stage on the ribosome. The polypeptide is Elongation factor Ts (Streptomyces avermitilis (strain ATCC 31267 / DSM 46492 / JCM 5070 / NBRC 14893 / NCIMB 12804 / NRRL 8165 / MA-4680)).